A 117-amino-acid polypeptide reads, in one-letter code: Large ribosomal subunit protein bL20c (117 aa).

Belongs to the bacterial ribosomal protein bL20 family.

Its subcellular location is the plastid. It is found in the chloroplast. In terms of biological role, binds directly to 23S ribosomal RNA and is necessary for the in vitro assembly process of the 50S ribosomal subunit. It is not involved in the protein synthesizing functions of that subunit. The sequence is that of Large ribosomal subunit protein bL20c from Manihot esculenta (Cassava).